Reading from the N-terminus, the 325-residue chain is Probable cell division protein WhiA (325 aa).

Residues 280-313 (SLKELGSMLKNPLGKSGVNHRLRKIDKIAEELRK) constitute a DNA-binding region (H-T-H motif).

Belongs to the WhiA family.

In terms of biological role, involved in cell division and chromosome segregation. This Caldicellulosiruptor saccharolyticus (strain ATCC 43494 / DSM 8903 / Tp8T 6331) protein is Probable cell division protein WhiA.